Here is a 198-residue protein sequence, read N- to C-terminus: Putative protein-methionine-sulfoxide reductase subunit YedZ1 (198 aa).

The next 4 membrane-spanning stretches (helical) occupy residues 12-32 (WLRV…MSGW), 63-83 (FAAM…NIFS), 124-144 (AAYL…LVLW), and 167-187 (FIGM…VALV).

The protein belongs to the HupC/HyaC/HydC family.

It localises to the cell inner membrane. Part of the YedY1-YedZ1 system that may repair oxidized proteins containing methionine sulfoxide residues (Met-O). The protein is Putative protein-methionine-sulfoxide reductase subunit YedZ1 of Azospira oryzae (strain ATCC BAA-33 / DSM 13638 / PS) (Dechlorosoma suillum).